The chain runs to 393 residues: Leucine aminopeptidase 1 (393 aa).

Positions 1 to 18 (MKLSQVSALAACVPAATA) are cleaved as a signal peptide. Positions 19 to 84 (RFVELMEADH…GSQGLRIKES (66 aa)) are excised as a propeptide. Asparagine 176 carries N-linked (GlcNAc...) asparagine glycosylation. Zn(2+) is bound by residues histidine 184, aspartate 202, glutamate 241, and aspartate 268. Cysteine 317 and cysteine 321 are disulfide-bonded. Position 350 (histidine 350) interacts with Zn(2+).

The protein belongs to the peptidase M28 family. M28E subfamily. Monomer. It depends on Zn(2+) as a cofactor.

It is found in the secreted. Its function is as follows. Extracellular aminopeptidase that allows assimilation of proteinaceous substrates. The polypeptide is Leucine aminopeptidase 1 (LAP1) (Metarhizium robertsii (strain ARSEF 23 / ATCC MYA-3075) (Metarhizium anisopliae (strain ARSEF 23))).